A 179-amino-acid chain; its full sequence is Crossover junction endodeoxyribonuclease RuvC (179 aa).

Catalysis depends on residues Asp-7, Glu-67, and Asp-139. Positions 7, 67, and 139 each coordinate Mg(2+).

Belongs to the RuvC family. As to quaternary structure, homodimer which binds Holliday junction (HJ) DNA. The HJ becomes 2-fold symmetrical on binding to RuvC with unstacked arms; it has a different conformation from HJ DNA in complex with RuvA. In the full resolvosome a probable DNA-RuvA(4)-RuvB(12)-RuvC(2) complex forms which resolves the HJ. Requires Mg(2+) as cofactor.

The protein localises to the cytoplasm. The enzyme catalyses Endonucleolytic cleavage at a junction such as a reciprocal single-stranded crossover between two homologous DNA duplexes (Holliday junction).. In terms of biological role, the RuvA-RuvB-RuvC complex processes Holliday junction (HJ) DNA during genetic recombination and DNA repair. Endonuclease that resolves HJ intermediates. Cleaves cruciform DNA by making single-stranded nicks across the HJ at symmetrical positions within the homologous arms, yielding a 5'-phosphate and a 3'-hydroxyl group; requires a central core of homology in the junction. The consensus cleavage sequence is 5'-(A/T)TT(C/G)-3'. Cleavage occurs on the 3'-side of the TT dinucleotide at the point of strand exchange. HJ branch migration catalyzed by RuvA-RuvB allows RuvC to scan DNA until it finds its consensus sequence, where it cleaves and resolves the cruciform DNA. The sequence is that of Crossover junction endodeoxyribonuclease RuvC from Sorangium cellulosum (strain So ce56) (Polyangium cellulosum (strain So ce56)).